A 97-amino-acid chain; its full sequence is ESAT-6-like protein EsxG (97 aa).

N-acetylserine is present on S2.

The protein belongs to the WXG100 family. CFP-10 subfamily. Forms a tight 1:1 complex with EsxH.

The protein localises to the secreted. EsxG, in complex with EsxH, disrupts ESCRT function and impairs host phagosome maturation, thereby promoting intracellular bacterial growth. The complex acts by interacting, via EsxH, with the host hepatocyte growth factor-regulated tyrosine kinase substrate (HGS/HRS), a component of the ESCRT machinery. EsxG stabilizes EsxH in the host cytosol. The polypeptide is ESAT-6-like protein EsxG (Mycobacterium tuberculosis (strain ATCC 25618 / H37Rv)).